A 454-amino-acid polypeptide reads, in one-letter code: Transcription factor bHLH123 (454 aa).

The span at 101 to 113 (SNANANTTSSTSS) shows a compositional bias: low complexity. Disordered stretches follow at residues 101 to 127 (SNANANTTSSTSSYQLQESDSSHHHQA), 185 to 228 (ATTT…QFGS), 270 to 348 (AAAG…KRKE), and 398 to 417 (GASLQHQQSDHSTELEVSEE). Polar residues-rich tracts occupy residues 185–195 (ATTTTPNSSSG) and 207–228 (SSDQQPSRNHQQSSLGYSQFGS). The segment covering 303–324 (EQPKNISEIRDSSSNEVKRGGN) has biased composition (basic and acidic residues). A bHLH domain is found at 334–383 (KSEAASPSPAFKRKEKMGDRIAALQQLVSPFGKTDAASVLSEAIEYIKFL).

In terms of assembly, homodimer.

The protein resides in the nucleus. In Arabidopsis thaliana (Mouse-ear cress), this protein is Transcription factor bHLH123 (BHLH123).